Here is a 367-residue protein sequence, read N- to C-terminus: NADH-quinone oxidoreductase subunit D (367 aa).

The protein belongs to the complex I 49 kDa subunit family. In terms of assembly, NDH-1 is composed of 14 different subunits. Subunits NuoB, C, D, E, F, and G constitute the peripheral sector of the complex.

It localises to the cell membrane. The catalysed reaction is a quinone + NADH + 5 H(+)(in) = a quinol + NAD(+) + 4 H(+)(out). In terms of biological role, NDH-1 shuttles electrons from NADH, via FMN and iron-sulfur (Fe-S) centers, to quinones in the respiratory chain. The immediate electron acceptor for the enzyme in this species is believed to be ubiquinone. Couples the redox reaction to proton translocation (for every two electrons transferred, four hydrogen ions are translocated across the cytoplasmic membrane), and thus conserves the redox energy in a proton gradient. The sequence is that of NADH-quinone oxidoreductase subunit D from Dehalococcoides mccartyi (strain ATCC BAA-2100 / JCM 16839 / KCTC 5957 / BAV1).